Consider the following 593-residue polypeptide: Dihydroxy-acid dehydratase (593 aa).

A compositionally biased stretch (acidic residues) spans 1–17 (MSQQTEPDDDAALDGDE). The interval 1 to 40 (MSQQTEPDDDAALDGDEPGAYGKDERLRSREVTEGPERAP) is disordered. The segment covering 22–40 (GKDERLRSREVTEGPERAP) has biased composition (basic and acidic residues). Cys-72 is a binding site for [2Fe-2S] cluster. A Mg(2+)-binding site is contributed by Asp-104. Residue Cys-145 participates in [2Fe-2S] cluster binding. Residues Asp-146 and Lys-147 each coordinate Mg(2+). The residue at position 147 (Lys-147) is an N6-carboxylysine. Cys-217 provides a ligand contact to [2Fe-2S] cluster. Glu-475 provides a ligand contact to Mg(2+). Ser-501 serves as the catalytic Proton acceptor.

Belongs to the IlvD/Edd family. In terms of assembly, homodimer. Requires [2Fe-2S] cluster as cofactor. The cofactor is Mg(2+).

The enzyme catalyses (2R)-2,3-dihydroxy-3-methylbutanoate = 3-methyl-2-oxobutanoate + H2O. The catalysed reaction is (2R,3R)-2,3-dihydroxy-3-methylpentanoate = (S)-3-methyl-2-oxopentanoate + H2O. It participates in amino-acid biosynthesis; L-isoleucine biosynthesis; L-isoleucine from 2-oxobutanoate: step 3/4. Its pathway is amino-acid biosynthesis; L-valine biosynthesis; L-valine from pyruvate: step 3/4. Functions in the biosynthesis of branched-chain amino acids. Catalyzes the dehydration of (2R,3R)-2,3-dihydroxy-3-methylpentanoate (2,3-dihydroxy-3-methylvalerate) into 2-oxo-3-methylpentanoate (2-oxo-3-methylvalerate) and of (2R)-2,3-dihydroxy-3-methylbutanoate (2,3-dihydroxyisovalerate) into 2-oxo-3-methylbutanoate (2-oxoisovalerate), the penultimate precursor to L-isoleucine and L-valine, respectively. The chain is Dihydroxy-acid dehydratase from Natronomonas pharaonis (strain ATCC 35678 / DSM 2160 / CIP 103997 / JCM 8858 / NBRC 14720 / NCIMB 2260 / Gabara) (Halobacterium pharaonis).